Consider the following 54-residue polypeptide: Large ribosomal subunit protein bL33 (54 aa).

It belongs to the bacterial ribosomal protein bL33 family.

This chain is Large ribosomal subunit protein bL33, found in Thermobifida fusca (strain YX).